The following is a 293-amino-acid chain: MATPDQDVRNRKINPEARMELKEHLREFRDRLIKAAIATIIAAIIGTVFLYQPFIEMISAPLQQINIETGRRANLNYGSVASPFDQLLKVGMYIGLVIASPVWLYQALRFLLPALHTKEKKYLFGFLTASIFAFACGVAISYFTLPGVVYALLKFTPVNESNYIDAGVYISFILKFVVTFSCAFIIPVILVGINMLGLIRGKTILKSWRWVVVLVAVIAALTAPGSDIMMMFVLMAPLLIFFFAAIGICMINDKRRDRKLAKLAQGSDEASLNTATSSEDLAKMGYFEEEKTS.

6 consecutive transmembrane segments (helical) span residues 35–55 (AAIATIIAAIIGTVFLYQPFI), 87–107 (LLKVGMYIGLVIASPVWLYQA), 123–143 (LFGFLTASIFAFACGVAISYF), 173–193 (ILKFVVTFSCAFIIPVILVGI), 204–224 (ILKSWRWVVVLVAVIAALTAP), and 228–248 (IMMMFVLMAPLLIFFFAAIGI).

It belongs to the TatC family. The Tat system comprises two distinct complexes: a TatABC complex, containing multiple copies of TatA, TatB and TatC subunits, and a separate TatA complex, containing only TatA subunits. Substrates initially bind to the TatABC complex, which probably triggers association of the separate TatA complex to form the active translocon.

The protein localises to the cell membrane. Functionally, part of the twin-arginine translocation (Tat) system that transports large folded proteins containing a characteristic twin-arginine motif in their signal peptide across membranes. Together with TatB, TatC is part of a receptor directly interacting with Tat signal peptides. This chain is Sec-independent protein translocase protein TatC, found in Rothia mucilaginosa (strain DY-18) (Stomatococcus mucilaginosus).